The chain runs to 398 residues: CCA-adding enzyme (398 aa).

Positions 32 and 35 each coordinate ATP. Residues Gly-32 and Arg-35 each contribute to the CTP site. Residues Asp-45 and Asp-47 each coordinate Mg(2+). Residues Arg-116, Asp-159, Arg-162, Arg-165, and Arg-168 each coordinate ATP. CTP is bound by residues Arg-116, Asp-159, Arg-162, Arg-165, and Arg-168.

This sequence belongs to the tRNA nucleotidyltransferase/poly(A) polymerase family. Bacterial CCA-adding enzyme type 3 subfamily. Homodimer. Requires Mg(2+) as cofactor.

It catalyses the reaction a tRNA precursor + 2 CTP + ATP = a tRNA with a 3' CCA end + 3 diphosphate. It carries out the reaction a tRNA with a 3' CCA end + 2 CTP + ATP = a tRNA with a 3' CCACCA end + 3 diphosphate. Its function is as follows. Catalyzes the addition and repair of the essential 3'-terminal CCA sequence in tRNAs without using a nucleic acid template. Adds these three nucleotides in the order of C, C, and A to the tRNA nucleotide-73, using CTP and ATP as substrates and producing inorganic pyrophosphate. tRNA 3'-terminal CCA addition is required both for tRNA processing and repair. Also involved in tRNA surveillance by mediating tandem CCA addition to generate a CCACCA at the 3' terminus of unstable tRNAs. While stable tRNAs receive only 3'-terminal CCA, unstable tRNAs are marked with CCACCA and rapidly degraded. In Lactobacillus johnsonii (strain CNCM I-12250 / La1 / NCC 533), this protein is CCA-adding enzyme.